The sequence spans 7152 residues: Replicase polyprotein 1ab (7152 aa).

The CoV Nsp1 globular domain occupies 54–174 (YDNHVKIDCR…HKWFQFCRLY (121 aa)). The region spanning 192 to 222 (FSVEDAYAEVHAEPKGKYSQKAYALLRQYRG) is the BetaCoV Nsp1 C-terminal domain. The region spanning 226 to 488 (VLFVDQYGCD…LITHALYLDY (263 aa)) is the CoV Nsp2 N-terminal domain. Zn(2+)-binding residues include Cys365, Cys370, Cys386, and Cys389. Residues 365–389 (CFNDNCDFYGWVSGNMMDGFSCPLC) form a C4 region. One can recognise a CoV Nsp2 middle domain in the interval 493 to 681 (CGNLEQNHIL…VNKFYTFFKL (189 aa)). The CoV Nsp2 C-terminal domain maps to 697 to 809 (LKTINGLVCI…LDQAWRFPCA (113 aa)). One can recognise a Ubiquitin-like 1 domain in the interval 811-923 (RKVNFNEKPV…MYCTFAIEDV (113 aa)). Tandem repeats lie at residues 945–954 (NDDEDVVTGD), 955–964 (NDDEDVVTGD), 965–974 (NDDEDVVTGD), 975–984 (NDDEDVVTGD), 985–994 (NDDEDVVTGD), 995–1004 (NDDEDVVTGD), 1005–1014 (NDDEDVVTGD), 1015–1024 (NDDEDVVTGD), 1025–1034 (NDDEDVVTGD), 1035–1044 (NDDEDVVTGD), and 1045–1054 (NDDEDVVTGD). The 11 X 10 AA tandem repeat of N-[DN]-D-E-D-V-V-T-G-D stretch occupies residues 945–1054 (NDDEDVVTGD…NDDEDVVTGD (110 aa)). The interval 947 to 1036 (DEDVVTGDND…DEDVVTGDND (90 aa)) is disordered. A Peptidase C16 1 domain is found at 1093–1343 (VFNDVYNDAL…VCFVKGDIIN (251 aa)). The active-site For PL1-PRO activity is Cys1131. 4 residues coordinate Zn(2+): Cys1208, Cys1211, Cys1234, and Cys1236. The C4-type 1 zinc-finger motif lies at 1208–1236 (CLKCGFSFDLNGLDAVFFYGDIVSHVCKC). Residues His1282 and Asp1293 each act as for PL1-PRO activity in the active site. The 172-residue stretch at 1321–1492 (ELAQLYGLCI…IIQKCQITSV (172 aa)) folds into the Macro domain. The DPUP domain occupies 1548-1619 (NDVRDYLLSK…TVNQVCVLLA (72 aa)). The Ubiquitin-like 2 domain occupies 1619–1674 (AKKIDVLLTVDGVNFKSISLTVGEVFGKILGNVFCDGIDVTKLKCSDFYADKILYQ). Positions 1688–1948 (SSFGFDQQQL…MVAYNPDLSQ (261 aa)) constitute a Peptidase C16 2 domain. Catalysis depends on Cys1727, which acts as the For PL2-PRO activity. Zn(2+)-binding residues include Cys1805, Cys1807, Cys1839, and Cys1841. The segment at 1805 to 1841 (CDCGIKQESRVGVDAVMHFGTLAKTDLFNGYKIGCNC) adopts a C4-type 2 zinc-finger fold. Residues His1884 and Asp1898 each act as for PL2-PRO activity in the active site. In terms of domain architecture, Nucleic acid-binding spans 1962–2063 (IKAQFKPFAK…TYFNKPSFKS (102 aa)). In terms of domain architecture, G2M spans 2078 to 2227 (ESQGNVVTSV…NDKTIFYTTE (150 aa)). 3 helical membrane passes run 2196 to 2216 (AIEFYGFLKWLFIYVFSLLHF), 2257 to 2277 (FLVVATVFLFWFNFLYINVIF), and 2288 to 2308 (FPIFVGRIVMWIKATFGLVTI). Residues 2196 to 2433 (AIEFYGFLKW…FVLLRFYIVV (238 aa)) are HD1. The region spanning 2293–2354 (GRIVMWIKAT…AIDFVQYEVD (62 aa)) is the 3Ecto domain. Cystine bridges form between Cys2309/Cys2333 and Cys2324/Cys2330. Helical transmembrane passes span 2371–2391 (LVIGYSLYTVWFYPLFCLIGL) and 2413–2433 (FIVFVANMLPAFVLLRFYIVV). The segment at 2441-2531 (GFIRHIVYGC…ELKRPVNPTD (91 aa)) is Y1. One can recognise a CoV Nsp3 Y domain in the interval 2441 to 2808 (GFIRHIVYGC…LTTPFSLKGG (368 aa)). Residues His2445, Cys2450, Cys2455, Cys2458, Cys2491, His2494, Cys2498, and Cys2501 each contribute to the Zn(2+) site. Residues 2445 to 2458 (HIVYGCNKAGCLFC) are ZF1. The tract at residues 2491–2501 (CVKHQWNCFNC) is ZF2. The tract at residues 2532–2624 (ASHYVVTDIK…LVDKKLITTA (93 aa)) is Y2. The segment at 2532 to 2808 (ASHYVVTDIK…LTTPFSLKGG (277 aa)) is coV-Y. A Y3 region spans residues 2625–2707 (CNGISVTQTM…KSMISAVAAG (83 aa)). Positions 2708 to 2808 (LEFTDENYNN…LTTPFSLKGG (101 aa)) are Y4. The next 5 membrane-spanning stretches (helical) occupy residues 2814-2834 (LLYILFFISLICFILLWALLP), 3089-3109 (ASSIFGAILAIVVVLVFYYLI), 3121-3141 (VVVINVIVWCINFLMLFVFQV), 3148-3168 (VYACFYFYVTLYFPSEISVIM), and 3173-3193 (IVMYGAIMPFWFCVTYVAMVI). The interval 2814–3193 (LLYILFFISL…FCVTYVAMVI (380 aa)) is HD2. The Nsp4C domain occupies 3207–3304 (IGVNVCNDST…TASVSTSFLQ (98 aa)). In terms of domain architecture, Peptidase C30 spans 3305–3607 (SGIVKMVSPT…YQQLAGVKLQ (303 aa)). Active-site for 3CL-PRO activity residues include His3345 and Cys3449. A run of 7 helical transmembrane segments spans residues 3621–3641 (ILISTFLFSCIISAFVKWTIF), 3646–3666 (THMIGVTLCVLCFVSFMMLLV), 3671–3691 (FYLTMYIIPVLCTLFYVNYLV), 3714–3734 (FTYVYEVFYGCILCVFAIFIT), 3742–3762 (IFSLMFLVGRIVTLISMWYFG), 3770–3790 (LLFITAFLGTYTWTTILSLAI), and 3813–3833 (LILLSYLFIGYILSCYWGFFS). An HD3 region spans residues 3621–3833 (ILISTFLFSC…ILSCYWGFFS (213 aa)). The RdRp Nsp7 cofactor domain maps to 3895-3983 (SKLTDVKCAN…DYVQDSTVLQ (89 aa)). Residues 3984–4180 (ALQSEFVNMA…YNEVANAVMQ (197 aa)) enclose the RdRp Nsp8 cofactor domain. One can recognise a Nsp9 ssRNA-binding domain in the interval 4181–4290 (NNELMPHKLK…GTLSSTIRLQ (110 aa)). Positions 4291-4428 (AGVATEYAAN…CVGSGVAVQS (138 aa)) constitute an ExoN/MTase coactivator domain. Positions 4364, 4367, 4373, 4380, 4406, 4409, 4417, and 4419 each coordinate Zn(2+). 2 zinc fingers span residues 4364-4380 (CIYCRARVEHPDVDGLC) and 4406-4419 (CQVCGFWRDGSCSC). Residues 4433-4688 (FLNRVRGTSV…DCELFVNDSY (256 aa)) form the NiRAN domain. Asn4636 and Asp4645 together coordinate Mn(2+). Residues 4689–4787 (RQFDLVQYDF…MNLDVDTHRY (99 aa)) enclose the Nsp12 Interface domain. Zn(2+) contacts are provided by His4718, Cys4724, Cys4729, Cys4733, and Cys4910. The Nsp12 RNA-dependent RNA polymerase domain occupies 4788 to 5355 (RLSLKDLLLY…NMYLKSAVMQ (568 aa)). A rdRp Fingers N-ter region spans residues 4790–5004 (SLKDLLLYAA…HQKCLKSIAA (215 aa)). A rdRp Palm N-ter region spans residues 5005–5043 (TRGVPVVIGTTKFYGGWDDMLRHLIKDVDNPVLMGWDYP). The RdRp catalytic domain maps to 5035–5197 (PVLMGWDYPK…CYNSDYASKG (163 aa)). Positions 5044-5102 (KCDRAMPNILRIVSSLVLARKHEFCCSHGDRFYRLANECAQVLSEIVMCGGCYYVKPGG) are rdRp Fingers C-ter. Zn(2+) is bound by residues His5065, Cys5068, and Cys5069. A rdRp Palm C-ter region spans residues 5103 to 5238 (TSSGDATTAF…TNGPHEFCSQ (136 aa)). Residues Ser5182, Asp5183, and Asp5184 contribute to the active site. Residues 5239 to 5355 (HTMLVKIDGD…NMYLKSAVMQ (117 aa)) form a rdRp Thumb region. A CV ZBD domain is found at 5356–5468 (SVGACVVCSS…DDFNKIASCK (113 aa)). Zn(2+) is bound by residues Cys5360, Cys5363, Cys5371, Cys5374, Cys5381, Cys5384, His5388, His5394, Cys5405, Cys5410, Cys5427, and His5430. The 182-residue stretch at 5611–5792 (SVPLLFQTNV…MCCLGPDIFL (182 aa)) folds into the (+)RNA virus helicase ATP-binding domain. 5636 to 5643 (GPPGTGKS) contributes to the ATP binding site. The (+)RNA virus helicase C-terminal domain maps to 5793–5962 (GNCYRCPKEI…TLSRLHCTTN (170 aa)). An ExoN domain is found at 6029-6244 (FFITKDEAIK…RCLAIYDCFC (216 aa)). Active-site residues include Asp6047, Glu6049, and Glu6148. Residues Cys6164, Cys6167, Cys6183, His6186, His6214, Cys6218, and His6221 each contribute to the Zn(2+) site. Catalysis depends on residues His6225 and Asp6230. Residue Cys6236 coordinates Zn(2+). The 227-residue stretch at 6253-6479 (YPIISNEVSI…NLWNTFTMLQ (227 aa)) folds into the N7-MTase domain. 6288–6294 (DIGNPKG) lines the S-adenosyl-L-methionine pocket. Residues 6366–6380 (CNGGSLYVNKHAFHT) are gpppA-binding. Residues Cys6404, Cys6425, Cys6436, and His6439 each contribute to the Zn(2+) site. The Nsp15 N-terminal oligomerization domain maps to 6480–6540 (SLENVIYNLV…NIAVELFTKR (61 aa)). An AV-Nsp11N/CoV-Nsp15M domain is found at 6541 to 6661 (SIRHHPELKI…FAMRKDGDDV (121 aa)). Positions 6711–6850 (EPRSDLERDF…NDNKIMTFYP (140 aa)) constitute a NendoU domain. Residues His6741, His6756, Lys6796, Lys6899, Asp6983, Lys7023, and Glu7056 contribute to the active site. The 295-residue stretch at 6855–7149 (TSDWKPGYSM…KEIFVGDSLV (295 aa)) folds into the Nidovirus-type SAM-dependent 2'-O-MTase domain.

It belongs to the coronaviruses polyprotein 1ab family. In terms of assembly, interacts with host PHB and PHB2. As to quaternary structure, interacts with papain-like protease nsp3 and non-structural protein 6. Monomer. Homodimer. Only the homodimer shows catalytic activity. In terms of assembly, interacts with nsp8 and nsp12 to form the replication-transcription complex (RTC): nsp12, nsp7, two subunits of nsp8, and up to two subunits of nsp13. As to quaternary structure, interacts with nsp7, nsp13 and nsp12 to form the replication-transcription complex (RTC): nsp12, nsp7, two subunits of nsp8, and up to two subunits of nsp13. Interacts with nsp12. In terms of assembly, interacts with proofreading exoribonuclease nsp14 and 2'-O-methyltransferase nsp16; these interactions enhance nsp14 and nsp16 enzymatic activities. As to quaternary structure, interacts with nsp7 and nsp8 to form the replication-transcription complex (RTC): nsp12, nsp7, two subunits of nsp8, and up to two subunits of nsp13. Interacts with nsp9. Interacts with nsp8 to form the replication-transcription complex (RTC): nsp12, nsp7, two subunits of nsp8, and up to two subunits of nsp13. The cofactor is Mn(2+). Mg(2+) is required as a cofactor. In terms of processing, specific enzymatic cleavages in vivo by its own proteases yield mature proteins. 3CL-PRO and PL-PRO proteinases are autocatalytically processed.

It localises to the host membrane. The protein resides in the host cytoplasm. It is found in the host perinuclear region. The protein localises to the host endoplasmic reticulum-Golgi intermediate compartment. The catalysed reaction is RNA(n) + a ribonucleoside 5'-triphosphate = RNA(n+1) + diphosphate. It carries out the reaction ATP + H2O = ADP + phosphate + H(+). It catalyses the reaction Thiol-dependent hydrolysis of ester, thioester, amide, peptide and isopeptide bonds formed by the C-terminal Gly of ubiquitin (a 76-residue protein attached to proteins as an intracellular targeting signal).. The enzyme catalyses a 5'-end (N(7)-methyl 5'-triphosphoguanosine)-ribonucleoside in mRNA + S-adenosyl-L-methionine = a 5'-end (N(7)-methyl 5'-triphosphoguanosine)-(2'-O-methyl-ribonucleoside) in mRNA + S-adenosyl-L-homocysteine + H(+). The catalysed reaction is uridylyl-uridylyl-ribonucleotide-RNA = a 3'-end uridylyl-2',3'-cyclophospho-uridine-RNA + a 5'-end dephospho-ribonucleoside-RNA. It carries out the reaction a 5'-end diphospho-ribonucleoside in mRNA + GTP + H(+) = a 5'-end (5'-triphosphoguanosine)-ribonucleoside in mRNA + diphosphate. It catalyses the reaction a 5'-end (5'-triphosphoguanosine)-ribonucleoside in mRNA + S-adenosyl-L-methionine = a 5'-end (N(7)-methyl 5'-triphosphoguanosine)-ribonucleoside in mRNA + S-adenosyl-L-homocysteine. Its function is as follows. The replicase polyprotein of coronaviruses is a multifunctional protein: it contains the activities necessary for the transcription of negative stranded RNA, leader RNA, subgenomic mRNAs and progeny virion RNA as well as proteinases responsible for the cleavage of the polyprotein into functional products. Inhibits host translation by interacting with the 40S ribosomal subunit. The nsp1-40S ribosome complex further induces an endonucleolytic cleavage near the 5'UTR of host mRNAs, targeting them for degradation. Viral mRNAs are not susceptible to nsp1-mediated endonucleolytic RNA cleavage thanks to the presence of a 5'-end leader sequence and are therefore protected from degradation. By suppressing host gene expression, nsp1 facilitates efficient viral gene expression in infected cells and evasion from host immune response. In terms of biological role, may play a role in the modulation of host cell survival signaling pathway by interacting with host PHB and PHB2. Indeed, these two proteins play a role in maintaining the functional integrity of the mitochondria and protecting cells from various stresses. Functionally, responsible for the cleavages located at the N-terminus of the replicase polyprotein. In addition, PL-PRO possesses a deubiquitinating/deISGylating activity and processes both 'Lys-48'- and 'Lys-63'-linked polyubiquitin chains from cellular substrates. Participates together with nsp4 in the assembly of virally-induced cytoplasmic double-membrane vesicles necessary for viral replication. Antagonizes innate immune induction of type I interferon by blocking the phosphorylation, dimerization and subsequent nuclear translocation of host IRF3. Also prevents host NF-kappa-B signaling. Its function is as follows. Participates in the assembly of virally-induced cytoplasmic double-membrane vesicles necessary for viral replication. Cleaves the C-terminus of replicase polyprotein at 11 sites. Recognizes substrates containing the core sequence [ILMVF]-Q-|-[SGACN]. Also able to bind an ADP-ribose-1''-phosphate (ADRP). In terms of biological role, plays a role in the initial induction of autophagosomes from host endoplasmic reticulum. Later, limits the expansion of these phagosomes that are no longer able to deliver viral components to lysosomes. Functionally, forms a hexadecamer with nsp8 (8 subunits of each) that may participate in viral replication by acting as a primase. Alternatively, may synthesize substantially longer products than oligonucleotide primers. Its function is as follows. Forms a hexadecamer with nsp7 (8 subunits of each) that may participate in viral replication by acting as a primase. Alternatively, may synthesize substantially longer products than oligonucleotide primers. Forms a primer, NSP9-pU, which is utilized by the polymerase for the initiation of RNA chains. Interacts with ribosome signal recognition particle RNA (SRP). Together with NSP8, suppress protein integration into the cell membrane, thereby disrupting host immune defenses. In terms of biological role, plays a pivotal role in viral transcription by stimulating both nsp14 3'-5' exoribonuclease and nsp16 2'-O-methyltransferase activities. Therefore plays an essential role in viral mRNAs cap methylation. Functionally, RNA-directed RNA polymerase that catalyzes the transcription of viral genomic and subgenomic RNAs. Acts in complex with nsp7 and nsp8 to transcribe both the minus and positive strands of genomic RNA. The kinase-like NiRAN domain of NSP12 attaches one or more nucleotides to the amino terminus of NSP9, forming a covalent RNA-protein intermediate that serves as transcription/replication primer. Subgenomic RNAs (sgRNAs) are formed by discontinuous transcription: The polymerase has the ability to pause at transcription-regulating sequences (TRS) and jump to the leader TRS, resulting in a major deletion. This creates a series of subgenomic RNAs that are replicated, transcribed and translated. In addition, Nsp12 is a subunit of the viral RNA capping enzyme that catalyzes the RNA guanylyltransferase reaction for genomic and sub-genomic RNAs. Subsequently, the NiRAN domain transfers RNA to GDP, and forms the core cap structure GpppA-RNA. Its function is as follows. Multi-functional protein with a zinc-binding domain in N-terminus displaying RNA and DNA duplex-unwinding activities with 5' to 3' polarity. Activity of helicase is dependent on magnesium. Plays a role in viral RNA synthesis through two distinct activities. The N7-guanine methyltransferase activity plays a role in the formation of the cap structure GpppA-RNA. The proofreading exoribonuclease reduces the sensitivity of the virus to RNA mutagens during replication. This activity acts on both ssRNA and dsRNA in a 3'-5' direction. In terms of biological role, plays a role in viral transcription/replication and prevents the simultaneous activation of host cell dsRNA sensors, such as MDA5/IFIH1, OAS, and PKR. Acts by degrading the 5'-polyuridines generated during replication of the poly(A) region of viral genomic and subgenomic RNAs. Catalyzes a two-step reaction in which a 2'3'-cyclic phosphate (2'3'-cP) is first generated by 2'-O transesterification, which is then hydrolyzed to a 3'-phosphate (3'-P). If not degraded, poly(U) RNA would hybridize with poly(A) RNA tails and activate host dsRNA sensors. Functionally, methyltransferase that mediates mRNA cap 2'-O-ribose methylation to the 5'-cap structure of viral mRNAs. N7-methyl guanosine cap is a prerequisite for binding of nsp16. Therefore plays an essential role in viral mRNAs cap methylation which is essential to evade immune system. This chain is Replicase polyprotein 1ab (rep), found in Homo sapiens (Human).